Consider the following 264-residue polypeptide: Thymidylate synthase (264 aa).

R21 is a dUMP binding site. H51 is a (6R)-5,10-methylene-5,6,7,8-tetrahydrofolate binding site. Position 126–127 (126–127 (RR)) interacts with dUMP. The active-site Nucleophile is C146. DUMP-binding positions include 166-169 (RSCD), N177, and 207-209 (HLY). D169 serves as a coordination point for (6R)-5,10-methylene-5,6,7,8-tetrahydrofolate. S263 is a binding site for (6R)-5,10-methylene-5,6,7,8-tetrahydrofolate.

This sequence belongs to the thymidylate synthase family. Bacterial-type ThyA subfamily. In terms of assembly, homodimer.

The protein localises to the cytoplasm. It carries out the reaction dUMP + (6R)-5,10-methylene-5,6,7,8-tetrahydrofolate = 7,8-dihydrofolate + dTMP. Its pathway is pyrimidine metabolism; dTTP biosynthesis. Its function is as follows. Catalyzes the reductive methylation of 2'-deoxyuridine-5'-monophosphate (dUMP) to 2'-deoxythymidine-5'-monophosphate (dTMP) while utilizing 5,10-methylenetetrahydrofolate (mTHF) as the methyl donor and reductant in the reaction, yielding dihydrofolate (DHF) as a by-product. This enzymatic reaction provides an intracellular de novo source of dTMP, an essential precursor for DNA biosynthesis. This is Thymidylate synthase from Buchnera aphidicola subsp. Acyrthosiphon pisum (strain 5A).